Here is a 180-residue protein sequence, read N- to C-terminus: Crossover junction endodeoxyribonuclease RuvC (180 aa).

Active-site residues include Asp-7, Glu-66, and Asp-138. The Mg(2+) site is built by Asp-7, Glu-66, and Asp-138.

It belongs to the RuvC family. Homodimer which binds Holliday junction (HJ) DNA. The HJ becomes 2-fold symmetrical on binding to RuvC with unstacked arms; it has a different conformation from HJ DNA in complex with RuvA. In the full resolvosome a probable DNA-RuvA(4)-RuvB(12)-RuvC(2) complex forms which resolves the HJ. Mg(2+) serves as cofactor.

It is found in the cytoplasm. The enzyme catalyses Endonucleolytic cleavage at a junction such as a reciprocal single-stranded crossover between two homologous DNA duplexes (Holliday junction).. Its function is as follows. The RuvA-RuvB-RuvC complex processes Holliday junction (HJ) DNA during genetic recombination and DNA repair. Endonuclease that resolves HJ intermediates. Cleaves cruciform DNA by making single-stranded nicks across the HJ at symmetrical positions within the homologous arms, yielding a 5'-phosphate and a 3'-hydroxyl group; requires a central core of homology in the junction. The consensus cleavage sequence is 5'-(A/T)TT(C/G)-3'. Cleavage occurs on the 3'-side of the TT dinucleotide at the point of strand exchange. HJ branch migration catalyzed by RuvA-RuvB allows RuvC to scan DNA until it finds its consensus sequence, where it cleaves and resolves the cruciform DNA. The protein is Crossover junction endodeoxyribonuclease RuvC of Burkholderia pseudomallei (strain 1710b).